The primary structure comprises 143 residues: Large ribosomal subunit protein uL15 (143 aa).

A disordered region spans residues 1-52 (MKLNTLAPAAGSKSAPKRLGRGIGSGLGKTSGKGHKGQKARSGGYHKVGFEG). Residues 21–31 (RGIGSGLGKTS) are compositionally biased toward gly residues.

Belongs to the universal ribosomal protein uL15 family. In terms of assembly, part of the 50S ribosomal subunit.

Functionally, binds to the 23S rRNA. The protein is Large ribosomal subunit protein uL15 of Francisella tularensis subsp. mediasiatica (strain FSC147).